A 201-amino-acid polypeptide reads, in one-letter code: LexA repressor (201 aa).

The segment at residues 28 to 48 (RAEIANQLGFRSANAAEEHLK) is a DNA-binding region (H-T-H motif). Residues S118 and K155 each act as for autocatalytic cleavage activity in the active site.

The protein belongs to the peptidase S24 family. As to quaternary structure, homodimer.

It catalyses the reaction Hydrolysis of Ala-|-Gly bond in repressor LexA.. Functionally, represses a number of genes involved in the response to DNA damage (SOS response), including recA and lexA. In the presence of single-stranded DNA, RecA interacts with LexA causing an autocatalytic cleavage which disrupts the DNA-binding part of LexA, leading to derepression of the SOS regulon and eventually DNA repair. This chain is LexA repressor, found in Saccharophagus degradans (strain 2-40 / ATCC 43961 / DSM 17024).